A 276-amino-acid chain; its full sequence is Acyl-[acyl-carrier-protein]--UDP-N-acetylglucosamine O-acyltransferase (276 aa).

The protein belongs to the transferase hexapeptide repeat family. LpxA subfamily. In terms of assembly, homotrimer.

It is found in the cytoplasm. It carries out the reaction a (3R)-hydroxyacyl-[ACP] + UDP-N-acetyl-alpha-D-glucosamine = a UDP-3-O-[(3R)-3-hydroxyacyl]-N-acetyl-alpha-D-glucosamine + holo-[ACP]. It participates in glycolipid biosynthesis; lipid IV(A) biosynthesis; lipid IV(A) from (3R)-3-hydroxytetradecanoyl-[acyl-carrier-protein] and UDP-N-acetyl-alpha-D-glucosamine: step 1/6. In terms of biological role, involved in the biosynthesis of lipid A, a phosphorylated glycolipid that anchors the lipopolysaccharide to the outer membrane of the cell. This is Acyl-[acyl-carrier-protein]--UDP-N-acetylglucosamine O-acyltransferase from Gloeothece citriformis (strain PCC 7424) (Cyanothece sp. (strain PCC 7424)).